A 148-amino-acid polypeptide reads, in one-letter code: Endoribonuclease YbeY (148 aa).

Zn(2+) contacts are provided by His105, His109, and Asp115.

This sequence belongs to the endoribonuclease YbeY family. It depends on Zn(2+) as a cofactor.

The protein localises to the cytoplasm. Its function is as follows. Single strand-specific metallo-endoribonuclease involved in late-stage 70S ribosome quality control and in maturation of the 3' terminus of the 16S rRNA. In Chlorobium phaeovibrioides (strain DSM 265 / 1930) (Prosthecochloris vibrioformis (strain DSM 265)), this protein is Endoribonuclease YbeY.